The sequence spans 720 residues: Polyribonucleotide nucleotidyltransferase (720 aa).

Mg(2+) contacts are provided by D484 and D490. Residues P551–I610 enclose the KH domain. One can recognise an S1 motif domain in the interval G620–R688. Residues P697–S720 are disordered.

Belongs to the polyribonucleotide nucleotidyltransferase family. Requires Mg(2+) as cofactor.

The protein resides in the cytoplasm. It carries out the reaction RNA(n+1) + phosphate = RNA(n) + a ribonucleoside 5'-diphosphate. Its function is as follows. Involved in mRNA degradation. Catalyzes the phosphorolysis of single-stranded polyribonucleotides processively in the 3'- to 5'-direction. In Dehalococcoides mccartyi (strain ATCC BAA-2100 / JCM 16839 / KCTC 5957 / BAV1), this protein is Polyribonucleotide nucleotidyltransferase.